Here is a 230-residue protein sequence, read N- to C-terminus: Orotidine 5'-phosphate decarboxylase (230 aa).

Substrate contacts are provided by residues Asp-11, Lys-34, 61–70 (DLKLHDIPNT), Thr-117, Arg-179, Gln-188, Gly-208, and Arg-209. Lys-63 functions as the Proton donor in the catalytic mechanism.

It belongs to the OMP decarboxylase family. Type 1 subfamily. As to quaternary structure, homodimer.

The enzyme catalyses orotidine 5'-phosphate + H(+) = UMP + CO2. It functions in the pathway pyrimidine metabolism; UMP biosynthesis via de novo pathway; UMP from orotate: step 2/2. In terms of biological role, catalyzes the decarboxylation of orotidine 5'-monophosphate (OMP) to uridine 5'-monophosphate (UMP). The polypeptide is Orotidine 5'-phosphate decarboxylase (Streptococcus pyogenes serotype M28 (strain MGAS6180)).